A 457-amino-acid polypeptide reads, in one-letter code: Cell division cycle 20.1, cofactor of APC complex (457 aa).

WD repeat units lie at residues 138-175 (VDDFYLNLLDWGSANVLAIALDHTVYLWDASTGSTSEL), 180-219 (EEKGPVTSINWAPDGRHVAVGLNNSEVQLWDSASNRQLRT), 223-260 (GHQSRVGSLAWNNHILTTGGMDGLIINNDVRIRSPIVE), 264-303 (GHTQEVCGLKWSGSGQQLASGGNDNVVHIWDRSVASSNST), 312-354 (EHTS…CLNS), 356-397 (DTGS…KMAE), and 400-439 (GHTSRVLYMAQSPDGCTVASAAGDETLRFWNVFGVPETAK).

The protein belongs to the WD repeat CDC20/Fizzy family. In terms of assembly, the APC/C is composed of at least 11 subunits that stay tightly associated throughout the cell cycle. Interacts with APC10, FZR1, FZR2, FZR3. Binds to GIG1 and PYM. Part of the mitotic checkpoint complex (MCC); interacts with MAD2, BUB3.1, BUBR1 and BUB1. Binds to cyclins CYCA1-2, CYCB2-1 and CYCB2-2. Interacts with PANS1. Expressed in meristems and organ primordia. Present in flowers, leaves, stems, roots, pollen grains and developing seeds.

Its subcellular location is the nucleus. The protein operates within protein modification; protein ubiquitination. Functionally, component of the anaphase promoting complex/cyclosome (APC/C), a cell cycle-regulated E3 ubiquitin-protein ligase complex that controls progression through mitosis and the G1 phase of the cell cycle. The protein is Cell division cycle 20.1, cofactor of APC complex (CDC20-1) of Arabidopsis thaliana (Mouse-ear cress).